The primary structure comprises 693 residues: MSKRDFLLEIGLEELPARFVSDGEKQLADKVESFLKEQRISFEQISSFSTPRRLAVLVIGLAEKQADVEEESRGPAKKIALDESGNWTKAAQGFARGQGVSVDDLYIQEVKGTEYIFAKKFVAGQETASLLPELKELITSLHFPKNMRWHTYSLRYARPIQWLVALYGQEVIPFEITGVAAGLETAGHRFLGENVTIDEPTLYKEKLLQQYVMADSEERKKAIRHQIQSIMEEKDWVIPIDEDLLDEVTNLVEYPTALFGRFDEAFLSLPNEVLITSMREHQRYFPVKNQAGELLPYFVTIRNGDHRHLENIVKGNEKVLRARLSDAAFFYGEDQKLNIDEANKRLDQIVYHEELGSIGDKIKRVKVLAASIAEKLGVTSQTLQAINRVAEICKFDLVTQMVGEFPELQGRMGEVYAEIAGEPPEVAKGIVEHYLPRFAGDQSPSSVQGTVVSLADKLDTIAACFGIGLIPTGSQDPYALRRQAAGVVQILLDHELDLDVDELLLETVEQLQEKELLTVPESEVVKQLREFFALRVKTKLQDEGVRYDLTDAVLASGISNVPVVFKKAKLLVSKVNTPEFKELVEGLSRVTNIAGKAEKNVAINPDLFEKEEERVLYEAYVQTKDLVQGALASGDVSAAYAALEQTIEPIHQYFEHVMVMVDEQVIKENRLALMHAFAGVIGSYANFQEIVFK.

This sequence belongs to the class-II aminoacyl-tRNA synthetase family. Tetramer of two alpha and two beta subunits.

The protein localises to the cytoplasm. The enzyme catalyses tRNA(Gly) + glycine + ATP = glycyl-tRNA(Gly) + AMP + diphosphate. The protein is Glycine--tRNA ligase beta subunit (glyS) of Halalkalibacterium halodurans (strain ATCC BAA-125 / DSM 18197 / FERM 7344 / JCM 9153 / C-125) (Bacillus halodurans).